We begin with the raw amino-acid sequence, 162 residues long: Probable chemoreceptor glutamine deamidase CheD 3 (162 aa).

It belongs to the CheD family.

The catalysed reaction is L-glutaminyl-[protein] + H2O = L-glutamyl-[protein] + NH4(+). In terms of biological role, probably deamidates glutamine residues to glutamate on methyl-accepting chemotaxis receptors (MCPs), playing an important role in chemotaxis. The polypeptide is Probable chemoreceptor glutamine deamidase CheD 3 (Geobacter sulfurreducens (strain ATCC 51573 / DSM 12127 / PCA)).